An 826-amino-acid chain; its full sequence is MLGLWLLSVLWTPAVAPGPPLPHVKQYEVVWPRRLAASRSRRALPSHWGQYPESLSYALGTSGHVFTLHLRKNRDLLGSSYTETYSAANGSEVTEQLQEQDHCLYQGHVEGYEGSAASISTCAGLRGFFRVGSTVHLIEPLDADEEGQHAMYQAKHLQQKAGTCGVKDTNLNDLGPRALEIYRAQPRNWLIPRETRYVELYVVADSQEFQKLGSREAVRQRVLEVVNHVDKLYQELSFRVVLVGLEIWNKDKFYISRYANVTLENFLSWREQNLQGQHPHDNVQLITGVDFIGSTVGLAKVSALCSRHSGAVNQDHSKNSIGVASTMAHELGHNLGMSHDEDIPGCYCPEPREGGGCIMTESIGSKFPRIFSRCSKIDLESFVTKPQTGCLTNVPDVNRFVGGPVCGNLFVEHGEQCDCGTPQDCQNPCCNATTCQLVKGAECASGTCCHECKVKPAGEVCRLSKDKCDLEEFCDGRKPTCPEDAFQQNGTPCPGGYCFDGSCPTLAQQCRDLWGPGARVAADSCYTFSIPPGCNGRMYSGRINRCGALYCEGGQKPLERSFCTFSSNHGVCHALGTGSNIDTFELVLQGTKCEEGKVCMDGSCQDLRVYRSENCSAKCNNHGVCNHKRECHCHKGWAPPNCVQRLADVSDEQAASTSLPVSVVVVLVILVAAMVIVAGIVIYRKAPRQIQRRSVAPKPISGLSNPLFYTRDSSLPAKNRPPDPSETVSTNQPPRPIVKPKRPPPAPPGAVSSSPLPVPVYAPKIPNQFRPDPPTKPLPELKPKQVKPTFAPPTPPVKPGTGGTVPGATQGAGEPKVALKVPIQKR.

Residues 1 to 16 form the signal peptide; the sequence is MLGLWLLSVLWTPAVA. The Extracellular portion of the chain corresponds to 17-658; it reads PGPPLPHVKQ…VSDEQAASTS (642 aa). 2 N-linked (GlcNAc...) asparagine glycosylation sites follow: Asn89 and Asn260. In terms of domain architecture, Peptidase M12B spans 196-395; it reads RYVELYVVAD…PQTGCLTNVP (200 aa). Intrachain disulfides connect Cys305-Cys390, Cys346-Cys374, Cys348-Cys357, Cys430-Cys452, Cys443-Cys449, Cys461-Cys481, Cys468-Cys498, Cys493-Cys503, Cys563-Cys615, Cys615-Cys625, Cys619-Cys631, and Cys633-Cys642. Residue His329 participates in Zn(2+) binding. Glu330 is an active-site residue. Zn(2+) is bound by residues His333 and His339. The Disintegrin domain maps to 403 to 489; sequence GPVCGNLFVE…TCPEDAFQQN (87 aa). Asn431 is a glycosylation site (N-linked (GlcNAc...) asparagine). In terms of domain architecture, EGF-like spans 611–643; that stretch reads RSENCSAKCNNHGVCNHKRECHCHKGWAPPNCV. Asn614 is a glycosylation site (N-linked (GlcNAc...) asparagine). Residues 659 to 683 traverse the membrane as a helical segment; sequence LPVSVVVVLVILVAAMVIVAGIVIY. Over 684–826 the chain is Cytoplasmic; the sequence is RKAPRQIQRR…VALKVPIQKR (143 aa). A disordered region spans residues 701–826; that stretch reads SGLSNPLFYT…VALKVPIQKR (126 aa). The segment covering 733–748 has biased composition (pro residues); the sequence is PPRPIVKPKRPPPAPP. A compositionally biased stretch (low complexity) spans 749–763; sequence GAVSSSPLPVPVYAP.

Interacts with FST3. Requires Zn(2+) as cofactor. Macrophages.

The protein localises to the membrane. In terms of biological role, possible involvement in extravasation of leukocytes. In Mus musculus (Mouse), this protein is Disintegrin and metalloproteinase domain-containing protein 8 (Adam8).